The sequence spans 486 residues: Small ribosomal subunit protein uS17B (486 aa).

Residues 1-112 (MRDIGINGIK…IENKSNINFV (112 aa)) form a 30S ribosomal protein S17 region. The interval 113-486 (DNLLNVDDKW…ELWTRKNYKS (374 aa)) is unknown.

It belongs to the universal ribosomal protein uS17 family. As to quaternary structure, part of the 30S ribosomal subunit.

Functionally, one of the primary rRNA binding proteins, it binds specifically to the 5'-end of 16S ribosomal RNA. The chain is Small ribosomal subunit protein uS17B from Methanosarcina acetivorans (strain ATCC 35395 / DSM 2834 / JCM 12185 / C2A).